A 629-amino-acid chain; its full sequence is MERSSRADLISEDSHPARTHTCGDLRAEDNGEAVVLKGWVDTRRDHGGLVFVDLRDRYGLTQVVFSPQDNQTAYEVAGQLRREDVISVQGTVRPRGEEAVNPDLPTGAIEVSADDLAVLNTSETPPFVVSAHEERQMNTNEDLRLAHRYLDLRRPDLQENIELRHRLYQTTHRYFDAHDFLEVETPVLMKSTPEGARDFLVPSRLHPGRFYALPQSPQTYKQLLMVGGLDRYVQIVKCFRDEDLRADRQPEFTQIDVEMTFATEEQVYELTEGLMADLWDTLEDTTLETPFPRMTYDEALRTYGTDKPDLRFDLELHDVSDCFAGSGFRVFDSIVDDGGHIVALRVPGEGDRGRAAMDRLEDHVTDEIGAAGLIYFQLPSDGSGIEQNLSSDALPHEYGRAAAEQVGAEAGDLVLTLAGHSPTVFEQAGALRLHMGEELGLRPPADEGDDAFLWVTDFPLMEYDEEAGRPVSMHHPFTAPHPDDLDRLDEDPTQVQARAYDLVLNGNEIGGGSIRIHNHETQMQVFDVLGIDEEEAQDRFGFLLDALRYGAPPHGGIALGLDRLVMLLAGADSLRDVIAFPKTQSGKEPMVKSPDWVDPEQLETLALRLDLPPDVEPPARIAQRKRLAS.

The interval 1–24 is disordered; the sequence is MERSSRADLISEDSHPARTHTCGD. Residues 12–24 are compositionally biased toward basic and acidic residues; the sequence is EDSHPARTHTCGD. Residue E194 participates in L-aspartate binding. Positions 218 to 221 are aspartate; the sequence is QTYK. R240 is a binding site for L-aspartate. ATP contacts are provided by residues 240-242 and Q249; that span reads RDE. Position 474 (H474) interacts with L-aspartate. E508 is an ATP binding site. Position 515 (R515) interacts with L-aspartate. 560-563 contacts ATP; the sequence is GLDR.

This sequence belongs to the class-II aminoacyl-tRNA synthetase family. Type 1 subfamily. In terms of assembly, homodimer.

Its subcellular location is the cytoplasm. The catalysed reaction is tRNA(Asx) + L-aspartate + ATP = L-aspartyl-tRNA(Asx) + AMP + diphosphate. Aspartyl-tRNA synthetase with relaxed tRNA specificity since it is able to aspartylate not only its cognate tRNA(Asp) but also tRNA(Asn). Reaction proceeds in two steps: L-aspartate is first activated by ATP to form Asp-AMP and then transferred to the acceptor end of tRNA(Asp/Asn). The chain is Aspartate--tRNA(Asp/Asn) ligase from Salinibacter ruber (strain DSM 13855 / M31).